Consider the following 319-residue polypeptide: Acetyl-coenzyme A carboxylase carboxyl transferase subunit alpha (319 aa).

The 262-residue stretch at 32–293 folds into the CoA carboxyltransferase C-terminal domain; the sequence is NVETEVRALR…KAVLLNELDA (262 aa).

It belongs to the AccA family. Acetyl-CoA carboxylase is a heterohexamer composed of biotin carboxyl carrier protein (AccB), biotin carboxylase (AccC) and two subunits each of ACCase subunit alpha (AccA) and ACCase subunit beta (AccD).

It is found in the cytoplasm. The enzyme catalyses N(6)-carboxybiotinyl-L-lysyl-[protein] + acetyl-CoA = N(6)-biotinyl-L-lysyl-[protein] + malonyl-CoA. The protein operates within lipid metabolism; malonyl-CoA biosynthesis; malonyl-CoA from acetyl-CoA: step 1/1. In terms of biological role, component of the acetyl coenzyme A carboxylase (ACC) complex. First, biotin carboxylase catalyzes the carboxylation of biotin on its carrier protein (BCCP) and then the CO(2) group is transferred by the carboxyltransferase to acetyl-CoA to form malonyl-CoA. This Xanthomonas oryzae pv. oryzae (strain MAFF 311018) protein is Acetyl-coenzyme A carboxylase carboxyl transferase subunit alpha.